The following is a 315-amino-acid chain: Ribosomal RNA small subunit methyltransferase H (315 aa).

S-adenosyl-L-methionine is bound by residues 33–35 (GGH), aspartate 52, phenylalanine 84, aspartate 106, and glutamine 113. Residues 295–315 (SDELEENNRSHSAKLRVAEKL) are disordered.

This sequence belongs to the methyltransferase superfamily. RsmH family.

The protein localises to the cytoplasm. The enzyme catalyses cytidine(1402) in 16S rRNA + S-adenosyl-L-methionine = N(4)-methylcytidine(1402) in 16S rRNA + S-adenosyl-L-homocysteine + H(+). Functionally, specifically methylates the N4 position of cytidine in position 1402 (C1402) of 16S rRNA. The polypeptide is Ribosomal RNA small subunit methyltransferase H (Lactobacillus gasseri (strain ATCC 33323 / DSM 20243 / BCRC 14619 / CIP 102991 / JCM 1131 / KCTC 3163 / NCIMB 11718 / NCTC 13722 / AM63)).